Reading from the N-terminus, the 466-residue chain is MSEQKSSNQMWGGRFASGPDAIMEEINASIGFDRKLYAQDIQGSLAHAAMLAKTGIIAAEDHKQIENGLKTIRKEIEEGKFTFSRKLEDIHMNIEARLAELIGPAAGRLHTARSRNDQVAVDFRLWVKQELEKTAAALKNLIEAFLERAEEHAATVMPGFTHLQTAQPVTFGHHCMAYVEMFGRDLSRVRDAIERIDESPLGAAALAGTGFPIDRHMTAKALGFREPTRNSLDSVSDRDYALEFLSLAAICAGHLSRLAEEIVIWSTPQFNFVRLSDAFSTGSSIMPQKKNPDAAELVRAKTGRINGSLVALLTIMKGLPLAYSKDMQEDKEQVFDAAENLELAIAAMAGMVRDLTVNVAAMKKAAGSGYSTATDLADWLVRTLGLPFREAHHVTGRAVALAESRKVDLAKLSLEELQSINPAITAEVFGYLTVEKSVKSRQSFGGTAPQEVRRQIRYWKKRIAKA.

Belongs to the lyase 1 family. Argininosuccinate lyase subfamily.

The protein resides in the cytoplasm. The enzyme catalyses 2-(N(omega)-L-arginino)succinate = fumarate + L-arginine. It participates in amino-acid biosynthesis; L-arginine biosynthesis; L-arginine from L-ornithine and carbamoyl phosphate: step 3/3. The protein is Argininosuccinate lyase of Brucella abortus (strain S19).